The chain runs to 126 residues: MAILGLGTDIVEIARIEAVISRSGERLARRVLSDNEWDIWETHQQPVRFLAKRFAVKEAAAKAFGTGIRNGLAFNQFEVFNDELGKPRLRLWGEALILAEKLGVAHMHVTLADERHYACATVILES.

Residues aspartate 9 and glutamate 58 each coordinate Mg(2+).

It belongs to the P-Pant transferase superfamily. AcpS family. It depends on Mg(2+) as a cofactor.

The protein resides in the cytoplasm. It carries out the reaction apo-[ACP] + CoA = holo-[ACP] + adenosine 3',5'-bisphosphate + H(+). Functionally, transfers the 4'-phosphopantetheine moiety from coenzyme A to a Ser of acyl-carrier-protein. The polypeptide is Holo-[acyl-carrier-protein] synthase (Salmonella paratyphi B (strain ATCC BAA-1250 / SPB7)).